A 932-amino-acid polypeptide reads, in one-letter code: Alanine--tRNA ligase (932 aa).

Zn(2+) is bound by residues His-623, His-627, Cys-726, and His-730. Residues 893–916 are disordered; it reads RVGGGGGGPPDFAQGGGPDVDSLD. The span at 894–910 shows a compositional bias: gly residues; the sequence is VGGGGGGPPDFAQGGGP.

The protein belongs to the class-II aminoacyl-tRNA synthetase family. Requires Zn(2+) as cofactor.

The protein localises to the cytoplasm. It catalyses the reaction tRNA(Ala) + L-alanine + ATP = L-alanyl-tRNA(Ala) + AMP + diphosphate. In terms of biological role, catalyzes the attachment of alanine to tRNA(Ala) in a two-step reaction: alanine is first activated by ATP to form Ala-AMP and then transferred to the acceptor end of tRNA(Ala). Also edits incorrectly charged Ser-tRNA(Ala) and Gly-tRNA(Ala) via its editing domain. The polypeptide is Alanine--tRNA ligase (Natronomonas pharaonis (strain ATCC 35678 / DSM 2160 / CIP 103997 / JCM 8858 / NBRC 14720 / NCIMB 2260 / Gabara) (Halobacterium pharaonis)).